A 282-amino-acid polypeptide reads, in one-letter code: Bifunctional protein FolD (282 aa).

NADP(+) is bound by residues 163-165 (NRS), Thr188, and Ile229.

This sequence belongs to the tetrahydrofolate dehydrogenase/cyclohydrolase family. As to quaternary structure, homodimer.

The catalysed reaction is (6R)-5,10-methylene-5,6,7,8-tetrahydrofolate + NADP(+) = (6R)-5,10-methenyltetrahydrofolate + NADPH. The enzyme catalyses (6R)-5,10-methenyltetrahydrofolate + H2O = (6R)-10-formyltetrahydrofolate + H(+). It functions in the pathway one-carbon metabolism; tetrahydrofolate interconversion. In terms of biological role, catalyzes the oxidation of 5,10-methylenetetrahydrofolate to 5,10-methenyltetrahydrofolate and then the hydrolysis of 5,10-methenyltetrahydrofolate to 10-formyltetrahydrofolate. This is Bifunctional protein FolD from Malacoplasma penetrans (strain HF-2) (Mycoplasma penetrans).